Consider the following 845-residue polypeptide: Translation initiation factor IF-2 (845 aa).

Basic and acidic residues-rich tracts occupy residues 139-198 (EAKR…EKPA) and 206-228 (FRSE…KELH). The disordered stretch occupies residues 139–253 (EAKRQAAEEE…PQKAAPAAKH (115 aa)). A tr-type G domain is found at 345–512 (SRAAVVTIMG…AILLQAEVME (168 aa)). Positions 354–361 (GHVDHGKT) are G1. Position 354-361 (354-361 (GHVDHGKT)) interacts with GTP. The segment at 379–383 (GITQH) is G2. The segment at 400–403 (DTPG) is G3. GTP contacts are provided by residues 400–404 (DTPGH) and 454–457 (NKID). The interval 454–457 (NKID) is G4. The segment at 490-492 (SAK) is G5.

It belongs to the TRAFAC class translation factor GTPase superfamily. Classic translation factor GTPase family. IF-2 subfamily.

The protein localises to the cytoplasm. In terms of biological role, one of the essential components for the initiation of protein synthesis. Protects formylmethionyl-tRNA from spontaneous hydrolysis and promotes its binding to the 30S ribosomal subunits. Also involved in the hydrolysis of GTP during the formation of the 70S ribosomal complex. This Nitrosococcus oceani (strain ATCC 19707 / BCRC 17464 / JCM 30415 / NCIMB 11848 / C-107) protein is Translation initiation factor IF-2.